We begin with the raw amino-acid sequence, 156 residues long: Small ribosomal subunit protein uS7 (156 aa).

This sequence belongs to the universal ribosomal protein uS7 family. In terms of assembly, part of the 30S ribosomal subunit. Contacts proteins S9 and S11.

One of the primary rRNA binding proteins, it binds directly to 16S rRNA where it nucleates assembly of the head domain of the 30S subunit. Is located at the subunit interface close to the decoding center, probably blocks exit of the E-site tRNA. This Cronobacter sakazakii (strain ATCC BAA-894) (Enterobacter sakazakii) protein is Small ribosomal subunit protein uS7.